Here is an 86-residue protein sequence, read N- to C-terminus: Cell division topological specificity factor (86 aa).

Belongs to the MinE family.

Functionally, prevents the cell division inhibition by proteins MinC and MinD at internal division sites while permitting inhibition at polar sites. This ensures cell division at the proper site by restricting the formation of a division septum at the midpoint of the long axis of the cell. In Parasynechococcus marenigrum (strain WH8102), this protein is Cell division topological specificity factor.